The chain runs to 233 residues: 7-cyano-7-deazaguanine synthase (233 aa).

7-17 (LSGGLDSAVTS) contacts ATP. 4 residues coordinate Zn(2+): C195, C206, C209, and C212.

This sequence belongs to the QueC family. The cofactor is Zn(2+).

It carries out the reaction 7-carboxy-7-deazaguanine + NH4(+) + ATP = 7-cyano-7-deazaguanine + ADP + phosphate + H2O + H(+). Its pathway is purine metabolism; 7-cyano-7-deazaguanine biosynthesis. Its function is as follows. Catalyzes the ATP-dependent conversion of 7-carboxy-7-deazaguanine (CDG) to 7-cyano-7-deazaguanine (preQ(0)). The sequence is that of 7-cyano-7-deazaguanine synthase from Methanococcus maripaludis (strain DSM 14266 / JCM 13030 / NBRC 101832 / S2 / LL).